The sequence spans 167 residues: Acetolactate synthase small subunit (167 aa).

An ACT domain is found at 7 to 81 (TLSVLVEAKP…NVIKIVELED (75 aa)).

The protein belongs to the acetolactate synthase small subunit family. In terms of assembly, dimer of large and small chains.

It catalyses the reaction 2 pyruvate + H(+) = (2S)-2-acetolactate + CO2. It participates in amino-acid biosynthesis; L-isoleucine biosynthesis; L-isoleucine from 2-oxobutanoate: step 1/4. Its pathway is amino-acid biosynthesis; L-valine biosynthesis; L-valine from pyruvate: step 1/4. This Mycobacterium avium protein is Acetolactate synthase small subunit (ilvH).